Reading from the N-terminus, the 530-residue chain is Cytochrome P450 2U1 (530 aa).

4 helical membrane passes run 21-41, 99-119, 247-267, and 328-348; these read LQAV…DWVW, VYGN…LSDF, ICLH…YLPF, and LFYI…NSLL. Cys-476 contacts heme. A helical membrane pass occupies residues 481–501; sequence LAKMELFLMFVSLMQSFTFAL.

It belongs to the cytochrome P450 family. It depends on heme as a cofactor. Specifically expressed in thymus and brain. In brain, expressed in cortex, cerebellum, olfactory bulbs, pons and medulla and the limbic structures (at protein level).

It is found in the endoplasmic reticulum membrane. The protein localises to the microsome membrane. The protein resides in the mitochondrion inner membrane. It catalyses the reaction an omega-methyl-long-chain fatty acid + reduced [NADPH--hemoprotein reductase] + O2 = an omega-hydroxy-long-chain fatty acid + oxidized [NADPH--hemoprotein reductase] + H2O + H(+). The catalysed reaction is (5Z,8Z,11Z,14Z)-eicosatetraenoate + reduced [NADPH--hemoprotein reductase] + O2 = 19-hydroxy-(5Z,8Z,11Z,14Z)-eicosatetraenoate + oxidized [NADPH--hemoprotein reductase] + H2O + H(+). It carries out the reaction (5Z,8Z,11Z,14Z)-eicosatetraenoate + reduced [NADPH--hemoprotein reductase] + O2 = 20-hydroxy-(5Z,8Z,11Z,14Z)-eicosatetraenoate + oxidized [NADPH--hemoprotein reductase] + H2O + H(+). The enzyme catalyses N-[(5Z,8Z,11Z,14Z)-eicosatetraenoyl]-serotonin + reduced [NADPH--hemoprotein reductase] + O2 = 2-oxo-N-[(5Z,8Z,11Z,14Z)-eicosatetraenoyl]-serotonin + oxidized [NADPH--hemoprotein reductase] + H2O + H(+). Functionally, a cytochrome P450 monooxygenase involved in the metabolism of arachidonic acid and its conjugates. Mechanistically, uses molecular oxygen inserting one oxygen atom into a substrate, and reducing the second into a water molecule, with two electrons provided by NADPH via cytochrome P450 reductase (CPR; NADPH-ferrihemoprotein reductase). Acts as an omega and omega-1 hydroxylase for arachidonic acid and possibly for other long chain fatty acids. May modulate the arachidonic acid signaling pathway and play a role in other fatty acid signaling processes. May down-regulate the biological activities of N-arachidonoyl-serotonin, an endocannabinoid that has anti-nociceptive effects through inhibition of fatty acid amide hydrolase FAAH, TRPV1 receptor and T-type calcium channels. Catalyzes C-2 oxidation of the indole ring of N-arachidonoyl-serotonin forming a less active product 2-oxo-N-arachidonoyl-serotonin. This is Cytochrome P450 2U1 (Cyp2u1) from Rattus norvegicus (Rat).